Here is a 464-residue protein sequence, read N- to C-terminus: Zinc transporter 6 (464 aa).

Over M1–K33 the chain is Cytoplasmic. The helical transmembrane segment at I34–S54 threads the bilayer. Topologically, residues T55–T64 are extracellular. A helical transmembrane segment spans residues Y65–M85. Over K86 to R98 the chain is Cytoplasmic. A helical transmembrane segment spans residues F99–L119. Over K120–T134 the chain is Extracellular. Residues G135–I155 form a helical membrane-spanning segment. The Cytoplasmic segment spans residues R156–P200. The chain crosses the membrane as a helical span at residues F201–I221. The Extracellular segment spans residues N222–D228. Residues T229–Y249 form a helical membrane-spanning segment. The Cytoplasmic portion of the chain corresponds to S250–Q464.

This sequence belongs to the cation diffusion facilitator (CDF) transporter (TC 2.A.4) family. SLC30A subfamily. In terms of assembly, heterodimer with SLC30A5; form a functional zinc ion transmembrane transporter.

Its subcellular location is the golgi apparatus. It localises to the trans-Golgi network membrane. Has probably no intrinsic transporter activity but together with SLC30A5 forms a functional zinc ion:proton antiporter heterodimer, mediating zinc entry into the lumen of organelles along the secretory pathway. As part of that zinc ion:proton antiporter, contributes to zinc ion homeostasis within the early secretory pathway and regulates the activation and folding of enzymes like alkaline phosphatases and enzymes involved in phosphatidylinositol glycan anchor biosynthesis. The sequence is that of Zinc transporter 6 (slc30a6) from Xenopus tropicalis (Western clawed frog).